Reading from the N-terminus, the 199-residue chain is Adult-specific cuticular protein ACP-22 (199 aa).

The signal sequence occupies residues 1–19 (MRLFIILSVASFGAIGVLS). Residues 63–103 (GGGGGGGGEGEEGREHELRGGGLELGGGGGGGGGGGGGGGE) are disordered. Residues 82 to 102 (GGGLELGGGGGGGGGGGGGGG) are compositionally biased toward gly residues. The region spanning 133 to 199 (HPEYHSDYHV…IARVSYRKHH (67 aa)) is the Chitin-binding type R&amp;R domain.

Epidermal regions synthesizing hard cuticle.

Its function is as follows. Cuticular proteins play a significant role in determining the physical properties of cuticles. The protein is Adult-specific cuticular protein ACP-22 (ACP22) of Tenebrio molitor (Yellow mealworm beetle).